The chain runs to 503 residues: Probable cytosol aminopeptidase (503 aa).

Mn(2+)-binding residues include lysine 270 and aspartate 275. Residue lysine 282 is part of the active site. 3 residues coordinate Mn(2+): aspartate 293, aspartate 352, and glutamate 354. The active site involves arginine 356.

The protein belongs to the peptidase M17 family. Mn(2+) serves as cofactor.

The protein resides in the cytoplasm. The enzyme catalyses Release of an N-terminal amino acid, Xaa-|-Yaa-, in which Xaa is preferably Leu, but may be other amino acids including Pro although not Arg or Lys, and Yaa may be Pro. Amino acid amides and methyl esters are also readily hydrolyzed, but rates on arylamides are exceedingly low.. It catalyses the reaction Release of an N-terminal amino acid, preferentially leucine, but not glutamic or aspartic acids.. Functionally, presumably involved in the processing and regular turnover of intracellular proteins. Catalyzes the removal of unsubstituted N-terminal amino acids from various peptides. The sequence is that of Probable cytosol aminopeptidase from Shigella boydii serotype 4 (strain Sb227).